Here is a 239-residue protein sequence, read N- to C-terminus: Large ribosomal subunit protein uL1 (239 aa).

The protein belongs to the universal ribosomal protein uL1 family. Part of the 50S ribosomal subunit.

Binds directly to 23S rRNA. The L1 stalk is quite mobile in the ribosome, and is involved in E site tRNA release. Its function is as follows. Protein L1 is also a translational repressor protein, it controls the translation of the L11 operon by binding to its mRNA. In Acidothermus cellulolyticus (strain ATCC 43068 / DSM 8971 / 11B), this protein is Large ribosomal subunit protein uL1.